A 472-amino-acid polypeptide reads, in one-letter code: Adenosylhomocysteinase (472 aa).

Residues Thr62, Asp137, and Glu197 each coordinate substrate. Thr198–Thr200 provides a ligand contact to NAD(+). Residues Lys227 and Asp231 each contribute to the substrate site. Residues Asn232, Gly261–Gly266, Glu284, Asn319, Ile340–His342, and Asn385 each bind NAD(+).

The protein belongs to the adenosylhomocysteinase family. NAD(+) is required as a cofactor.

It is found in the cytoplasm. It catalyses the reaction S-adenosyl-L-homocysteine + H2O = L-homocysteine + adenosine. It functions in the pathway amino-acid biosynthesis; L-homocysteine biosynthesis; L-homocysteine from S-adenosyl-L-homocysteine: step 1/1. In terms of biological role, may play a key role in the regulation of the intracellular concentration of adenosylhomocysteine. The chain is Adenosylhomocysteinase from Bordetella bronchiseptica (strain ATCC BAA-588 / NCTC 13252 / RB50) (Alcaligenes bronchisepticus).